Here is a 630-residue protein sequence, read N- to C-terminus: Vacuolar protein 8 (630 aa).

G2 carries N-myristoyl glycine lipidation. ARM repeat units follow at residues 74–115 (EITE…NLAV), 117–156 (AENK…NLAT), 158–197 (DENK…NMTH), 199–238 (DENR…NIAV), 242–281 (NRKK…NLAS), 283–322 (SKYQ…NVSI), 324–364 (PANE…NLAA), 408–447 (DDLK…NLSS), and 456–495 (FNAV…QLLE). 2 disordered regions span residues 519–558 (AKSP…EGEG) and 572–630 (EVGE…GRDR). The span at 543-558 (SEDEFEDGLTDQEGEG) shows a compositional bias: acidic residues. Residues 598-607 (GQGQTSQVGS) show a composition bias toward polar residues.

The protein belongs to the beta-catenin family.

Its subcellular location is the vacuole membrane. Its function is as follows. Functions in both vacuole inheritance and protein targeting from the cytoplasm to vacuole. The chain is Vacuolar protein 8 (VAC8) from Cryptococcus neoformans var. neoformans serotype D (strain B-3501A) (Filobasidiella neoformans).